The primary structure comprises 93 residues: C-C motif chemokine 17 (93 aa).

Positions 1–23 (MMSLQMLLLAALLLGTSLQHASA) are cleaved as a signal peptide. Cystine bridges form between cysteine 33-cysteine 57 and cysteine 34-cysteine 73.

The protein belongs to the intercrine beta (chemokine CC) family.

The protein resides in the secreted. Functionally, chemokine, which displays chemotactic activity for T lymphocytes, preferentially Th2 cells, but not monocytes or granulocytes. Therefore plays an important role in a wide range of inflammatory and immunological processes. Acts by binding to CCR4 at T-cell surface. Mediates GM-CSF/CSF2-driven pain and inflammation. In the brain, required to maintain the typical, highly branched morphology of hippocampal microglia under homeostatic conditions. May be important for the appropriate adaptation of microglial morphology and synaptic plasticity to acute lipopolysaccharide (LPS)-induced neuroinflammation. Plays a role in wound healing, mainly by inducing fibroblast migration into the wound. This is C-C motif chemokine 17 (Ccl17) from Rattus norvegicus (Rat).